We begin with the raw amino-acid sequence, 954 residues long: Bifunctional glutamine synthetase adenylyltransferase/adenylyl-removing enzyme (954 aa).

Residues 1-452 form an adenylyl removase region; it reads MAVQKDSNKS…HFKATVGGEE (452 aa). Residues 458–954 form an adenylyl transferase region; that stretch reads EHWTAQLWNV…ILAIYQAILE (497 aa).

The protein belongs to the GlnE family. The cofactor is Mg(2+).

It carries out the reaction [glutamine synthetase]-O(4)-(5'-adenylyl)-L-tyrosine + phosphate = [glutamine synthetase]-L-tyrosine + ADP. It catalyses the reaction [glutamine synthetase]-L-tyrosine + ATP = [glutamine synthetase]-O(4)-(5'-adenylyl)-L-tyrosine + diphosphate. Involved in the regulation of glutamine synthetase GlnA, a key enzyme in the process to assimilate ammonia. When cellular nitrogen levels are high, the C-terminal adenylyl transferase (AT) inactivates GlnA by covalent transfer of an adenylyl group from ATP to specific tyrosine residue of GlnA, thus reducing its activity. Conversely, when nitrogen levels are low, the N-terminal adenylyl removase (AR) activates GlnA by removing the adenylyl group by phosphorolysis, increasing its activity. The regulatory region of GlnE binds the signal transduction protein PII (GlnB) which indicates the nitrogen status of the cell. The sequence is that of Bifunctional glutamine synthetase adenylyltransferase/adenylyl-removing enzyme from Shewanella oneidensis (strain ATCC 700550 / JCM 31522 / CIP 106686 / LMG 19005 / NCIMB 14063 / MR-1).